The sequence spans 484 residues: Maintenance of mitochondrial morphology protein 1 (484 aa).

The Lumenal portion of the chain corresponds to 1 to 22; sequence MSFQQSETVPVPAQSSLSFTQG. A helical membrane pass occupies residues 23-43; it reads FLLGQLSVVLLIGAFIKFFIF. The Cytoplasmic segment spans residues 44–484; sequence GEAPPPPSRG…PGSLSGAAAR (441 aa). Disordered stretches follow at residues 50 to 98, 272 to 319, and 388 to 484; these read PSRG…SSST, STPP…TGSP, and RTGV…AAAR. A compositionally biased stretch (basic residues) spans 54 to 64; that stretch reads LSHRASTHRRS. Composition is skewed to polar residues over residues 65–78 and 85–98; these read NSIY…ANNR and SNSN…SSST. One can recognise an SMP-LTD domain in the interval 130–380; that stretch reads QPESLDWFNV…EPRVQVVGLP (251 aa). Residues 272-286 show a composition bias toward pro residues; it reads STPPLHTPSPSPSPP. A compositionally biased stretch (polar residues) spans 399–408; that stretch reads TGSNAASRSA. The span at 413-427 shows a compositional bias: basic and acidic residues; sequence LGDHHLGDREPEGLR. Composition is skewed to polar residues over residues 437 to 449 and 466 to 476; these read QFDS…SYNV and GALSEQFQMPG.

Belongs to the MMM1 family. As to quaternary structure, homodimer. Component of the ER-mitochondria encounter structure (ERMES) or MDM complex, composed of mmm1, mdm10, mdm12 and mdm34. A mmm1 homodimer associates with one molecule of mdm12 on each side in a pairwise head-to-tail manner, and the SMP-LTD domains of mmm1 and mdm12 generate a continuous hydrophobic tunnel for phospholipid trafficking.

It is found in the endoplasmic reticulum membrane. In terms of biological role, component of the ERMES/MDM complex, which serves as a molecular tether to connect the endoplasmic reticulum (ER) and mitochondria. Components of this complex are involved in the control of mitochondrial shape and protein biogenesis, and function in nonvesicular lipid trafficking between the ER and mitochondria. The mdm12-mmm1 subcomplex functions in the major beta-barrel assembly pathway that is responsible for biogenesis of all outer membrane beta-barrel proteins, and acts in a late step after the SAM complex. The mdm10-mdm12-mmm1 subcomplex further acts in the TOM40-specific pathway after the action of the mdm12-mmm1 complex. Essential for establishing and maintaining the structure of mitochondria and maintenance of mtDNA nucleoids. The polypeptide is Maintenance of mitochondrial morphology protein 1 (Aspergillus niger (strain ATCC MYA-4892 / CBS 513.88 / FGSC A1513)).